Here is a 324-residue protein sequence, read N- to C-terminus: Olfactory receptor 6K2 (324 aa).

Over 1–25 (MESPNRTTIQEFIFSAFPYSWVKSV) the chain is Extracellular. N-linked (GlcNAc...) asparagine glycosylation is present at Asn-5. Residues 26–46 (VCFVPLLFIYAFIVVGNLVII) form a helical membrane-spanning segment. At 47–54 (TVVQLNTH) the chain is on the cytoplasmic side. Residues 55–75 (LHTPMYTFISALSFLEIWYTT) traverse the membrane as a helical segment. Topologically, residues 76–98 (ATIPKMLSSLLSERSISFNGCLL) are extracellular. Cys-96 and Cys-188 are disulfide-bonded. The chain crosses the membrane as a helical span at residues 99–119 (QMYFFHSTGICEVCLLTVMAF). Residues 120-138 (DHYLAICSPLHYPSIMTPK) lie on the Cytoplasmic side of the membrane. Residues 139 to 159 (LCTQLTLSCCVCGFITPLPEI) form a helical membrane-spanning segment. At 160-198 (AWISTLPFCGSNHLEHIFCDFLPVLRLACTDTRAIVMIQ) the chain is on the extracellular side. The helical transmembrane segment at 199–218 (VVDVIHAVEIITAVMLIFMS) threads the bilayer. Over 219–238 (YDGIVAVILRIHSAGGRRTA) the chain is Cytoplasmic. A helical membrane pass occupies residues 239–259 (FSTCVSHFIVFSLFFGSVTLM). Residues 260–272 (YLRFSATYSLFWD) are Extracellular-facing. Residues 273–293 (IAIALAFAVLSPFFNPIIYSL) form a helical membrane-spanning segment. The Cytoplasmic segment spans residues 294–324 (RNKEIKEAIKKHIGQAKIFFSVRPGTSSKIF).

The protein belongs to the G-protein coupled receptor 1 family.

It localises to the cell membrane. In terms of biological role, odorant receptor. This is Olfactory receptor 6K2 (OR6K2) from Homo sapiens (Human).